Here is a 440-residue protein sequence, read N- to C-terminus: Deoxyguanosinetriphosphate triphosphohydrolase-like protein (440 aa).

An HD domain is found at 61–256 (RLIHSLEVSC…MEAADDLCYS (196 aa)).

Belongs to the dGTPase family. Type 3 subfamily.

This Synechocystis sp. (strain ATCC 27184 / PCC 6803 / Kazusa) protein is Deoxyguanosinetriphosphate triphosphohydrolase-like protein.